The primary structure comprises 300 residues: Ferredoxin/F(420)H(2)-dependent CoB-CoM heterodisulfide reductase subunit B (300 aa).

Belongs to the HdrB family. In terms of assembly, the ferredoxin/F(420)H(2)-dependent CoB-CoM heterodisulfide reductase is composed of three subunits; HdrA2, HdrB2 and HdrC2. It depends on [4Fe-4S] cluster as a cofactor.

The protein resides in the cytoplasm. The catalysed reaction is coenzyme B + coenzyme M + 2 oxidized [2Fe-2S]-[ferredoxin] = coenzyme M-coenzyme B heterodisulfide + 2 reduced [2Fe-2S]-[ferredoxin] + 2 H(+). It carries out the reaction coenzyme B + 2 oxidized coenzyme F420-(gamma-L-Glu)(n) + coenzyme M + 2 reduced [2Fe-2S]-[ferredoxin] + 4 H(+) = coenzyme M-coenzyme B heterodisulfide + 2 reduced coenzyme F420-(gamma-L-Glu)(n) + 2 oxidized [2Fe-2S]-[ferredoxin]. It participates in cofactor metabolism; coenzyme M-coenzyme B heterodisulfide reduction; coenzyme B and coenzyme M from coenzyme M-coenzyme B heterodisulfide: step 1/1. Functionally, part of a complex that catalyzes the reversible reduction of CoM-S-S-CoB to the thiol-coenzymes H-S-CoM (coenzyme M) and H-S-CoB (coenzyme B). Catalyzes the transfer of electrons from ferredoxin to CoM-S-S-CoB during methanogenesis from acetate. Electrons transfer from ferredoxin to CoM-S-S-CoB via HdrA2, HdrC2 and HdrB2. In addition, the complex can use electron bifurcation to direct electron pairs from reduced coenzyme F420 towards the reduction of both ferredoxin and CoB-CoM heterodisulfide. This activity may take place during Fe(III)-dependent anaerobic methane oxidation. This is Ferredoxin/F(420)H(2)-dependent CoB-CoM heterodisulfide reductase subunit B from Methanosarcina acetivorans (strain ATCC 35395 / DSM 2834 / JCM 12185 / C2A).